Reading from the N-terminus, the 448-residue chain is Tubulin beta chain (448 aa).

The GTP site is built by Gln11, Glu69, Ser138, Gly142, Thr143, Gly144, Asn204, and Asn226. Glu69 lines the Mg(2+) pocket. Positions 426 to 448 are disordered; it reads QDAGIDEEEEEYEEEAPVDEPLE. Residues 429 to 448 show a composition bias toward acidic residues; the sequence is GIDEEEEEYEEEAPVDEPLE.

This sequence belongs to the tubulin family. Dimer of alpha and beta chains. A typical microtubule is a hollow water-filled tube with an outer diameter of 25 nm and an inner diameter of 15 nM. Alpha-beta heterodimers associate head-to-tail to form protofilaments running lengthwise along the microtubule wall with the beta-tubulin subunit facing the microtubule plus end conferring a structural polarity. Microtubules usually have 13 protofilaments but different protofilament numbers can be found in some organisms and specialized cells. Requires Mg(2+) as cofactor.

Its subcellular location is the cytoplasm. It is found in the cytoskeleton. In terms of biological role, tubulin is the major constituent of microtubules, a cylinder consisting of laterally associated linear protofilaments composed of alpha- and beta-tubulin heterodimers. Microtubules grow by the addition of GTP-tubulin dimers to the microtubule end, where a stabilizing cap forms. Below the cap, tubulin dimers are in GDP-bound state, owing to GTPase activity of alpha-tubulin. The polypeptide is Tubulin beta chain (TUB2) (Epichloe coenophiala (Tall fescue endophyte fungus)).